Reading from the N-terminus, the 166-residue chain is Phospholipase A2 inhibitor clone 11 (166 aa).

A signal peptide spans 1-19 (MRLILLSGLLLLGIFLANG). In terms of domain architecture, C-type lectin spans 46-161 (LKGSFLIVHK…CDDNLLVVCE (116 aa)). Disulfide bonds link C83-C160 and C138-C152. An N-linked (GlcNAc...) asparagine glycan is attached at N122.

The protein belongs to the alpha-type phospholipase A2 inhibitor family. In terms of assembly, homotrimer; non-covalently linked. In terms of tissue distribution, expressed by the liver.

It localises to the secreted. In terms of biological role, this phospholipase A2 inhibitor binds directly phospholipase A2 in the presence or absence of calcium. In Bothrops neuwiedi (Neuwied's lancehead), this protein is Phospholipase A2 inhibitor clone 11.